The sequence spans 746 residues: Exocyst complex component 3-like protein (746 aa).

Residues 1–23 (MDSAAKDEMQPALSPGPEWPEQE) are disordered. Residues 1 to 370 (MDSAAKDEMQ…DVSQLEPLLT (370 aa)) form a mediates interaction with EXOC2, EXOC4 and EXOC5 region.

Belongs to the SEC6 family. As to quaternary structure, interacts with EXOC2, EXOC4 and EXOC5; may be part of the exocyst.

It is found in the cytoplasmic vesicle. The protein resides in the secretory vesicle. Functionally, as part of the exocyst, may play a role in regulated exocytosis of insulin granules. The polypeptide is Exocyst complex component 3-like protein (EXOC3L1) (Homo sapiens (Human)).